We begin with the raw amino-acid sequence, 775 residues long: Serine/threonine-protein kinase-like protein CCR1 (775 aa).

The signal sequence occupies residues Met1–Gly23. Residues Phe24 to Leu439 are Extracellular-facing. N-linked (GlcNAc...) asparagine glycosylation is found at Asn57, Asn102, Asn167, Asn213, Asn220, Asn241, Asn261, Asn292, Asn328, and Asn360. The stretch at Pro351 to Cys406 is one TNFR-Cys repeat. Cystine bridges form between Cys352–Cys381, Cys384–Cys398, and Cys388–Cys406. N-linked (GlcNAc...) asparagine glycosylation is present at Asn414. The chain crosses the membrane as a helical span at residues Val440 to Val460. The Cytoplasmic segment spans residues Pro461–Phe775. In terms of domain architecture, Protein kinase spans Phe520–Arg770. ATP is bound by residues Leu526 to Val534 and Lys548. Catalysis depends on Asp645, which acts as the Proton acceptor.

The protein belongs to the protein kinase superfamily. Ser/Thr protein kinase family. Homodimer. Expressed in roots, leaves, shoot apical meristems (SAM), and floral buds.

It is found in the membrane. It catalyses the reaction L-seryl-[protein] + ATP = O-phospho-L-seryl-[protein] + ADP + H(+). It carries out the reaction L-threonyl-[protein] + ATP = O-phospho-L-threonyl-[protein] + ADP + H(+). Its function is as follows. Serine/threonine-protein kinase with low activity. This is Serine/threonine-protein kinase-like protein CCR1 (CCR1) from Arabidopsis thaliana (Mouse-ear cress).